The primary structure comprises 343 residues: L-ornithine/L-arginine 3-hydroxylase (343 aa).

The Fe cation site is built by H147 and E149. A compositionally biased stretch (polar residues) spans 199-215 (MPDNSHLPQNTAESTGD). Residues 199 to 218 (MPDNSHLPQNTAESTGDPTK) are disordered. H302 lines the Fe cation pocket. R316 is a 2-oxoglutarate binding site.

This sequence belongs to the clavaminate synthase family. Fe(2+) serves as cofactor.

It catalyses the reaction L-ornithine + 2-oxoglutarate + O2 = (3S)-3-hydroxy-L-ornithine + succinate + CO2. The enzyme catalyses L-arginine + 2-oxoglutarate + O2 = (2S,3S)-hydroxyarginine + succinate + CO2. Its function is as follows. Alpha-ketoglutarate-dependent dioxygenase that in vitro catalyzes the regio- and stereoselective hydroxylation of L-ornithine and L-arginine, leading to (3S)-3-hydroxy-L-ornithine and (3S)-3-hydroxy-L-arginine, respectively. Cannot use L-lysine, D-ornithine, or D-arginine as substrate. This chain is L-ornithine/L-arginine 3-hydroxylase, found in Catenulispora acidiphila (strain DSM 44928 / JCM 14897 / NBRC 102108 / NRRL B-24433 / ID139908).